Reading from the N-terminus, the 505-residue chain is Lysine--tRNA ligase (505 aa).

Positions 415 and 422 each coordinate Mg(2+).

The protein belongs to the class-II aminoacyl-tRNA synthetase family. As to quaternary structure, homodimer. Requires Mg(2+) as cofactor.

The protein resides in the cytoplasm. The enzyme catalyses tRNA(Lys) + L-lysine + ATP = L-lysyl-tRNA(Lys) + AMP + diphosphate. In Xanthomonas axonopodis pv. citri (strain 306), this protein is Lysine--tRNA ligase.